Reading from the N-terminus, the 206-residue chain is Large ribosomal subunit protein uL4 (206 aa).

Residues 46-78 (GNRAQKDREQVKHTTKKPWRQKGTGRARAGMSS) are disordered. The span at 58–70 (HTTKKPWRQKGTG) shows a compositional bias: basic residues.

The protein belongs to the universal ribosomal protein uL4 family. In terms of assembly, part of the 50S ribosomal subunit.

In terms of biological role, one of the primary rRNA binding proteins, this protein initially binds near the 5'-end of the 23S rRNA. It is important during the early stages of 50S assembly. It makes multiple contacts with different domains of the 23S rRNA in the assembled 50S subunit and ribosome. Forms part of the polypeptide exit tunnel. This is Large ribosomal subunit protein uL4 from Burkholderia lata (strain ATCC 17760 / DSM 23089 / LMG 22485 / NCIMB 9086 / R18194 / 383).